The chain runs to 331 residues: tRNA N6-adenosine threonylcarbamoyltransferase (331 aa).

Fe cation contacts are provided by H109, H113, and Y130. Substrate is bound by residues 130-134, D162, D183, and S262; that span reads YLSGG. Position 290 (D290) interacts with Fe cation.

It belongs to the KAE1 / TsaD family. Requires Fe(2+) as cofactor.

It is found in the cytoplasm. The enzyme catalyses L-threonylcarbamoyladenylate + adenosine(37) in tRNA = N(6)-L-threonylcarbamoyladenosine(37) in tRNA + AMP + H(+). Its function is as follows. Required for the formation of a threonylcarbamoyl group on adenosine at position 37 (t(6)A37) in tRNAs that read codons beginning with adenine. Is probably involved in the transfer of the threonylcarbamoyl moiety of threonylcarbamoyl-AMP (TC-AMP) to the N6 group of A37. The protein is tRNA N6-adenosine threonylcarbamoyltransferase of Saccharolobus islandicus (strain Y.G.57.14 / Yellowstone #1) (Sulfolobus islandicus).